The following is a 346-amino-acid chain: RNA polymerase II holoenzyme cyclin-like subunit (346 aa).

The region spanning N59–H158 is the Cyclin N-terminal domain.

This sequence belongs to the cyclin family. Cyclin C subfamily. In terms of assembly, component of the SRB8-11 complex, a regulatory module of the Mediator complex.

The protein resides in the nucleus. Functionally, component of the SRB8-11 complex. The SRB8-11 complex is a regulatory module of the Mediator complex which is itself involved in regulation of basal and activated RNA polymerase II-dependent transcription. The SRB8-11 complex may be involved in the transcriptional repression of a subset of genes regulated by Mediator. It may inhibit the association of the Mediator complex with RNA polymerase II to form the holoenzyme complex. The SRB8-11 complex phosphorylates the C-terminal domain (CTD) of the largest subunit of RNA polymerase II. The protein is RNA polymerase II holoenzyme cyclin-like subunit (SSN8) of Scheffersomyces stipitis (strain ATCC 58785 / CBS 6054 / NBRC 10063 / NRRL Y-11545) (Yeast).